The primary structure comprises 298 residues: Homoserine kinase (298 aa).

83-93 serves as a coordination point for ATP; the sequence is PISRGLGSSSS.

It belongs to the GHMP kinase family. Homoserine kinase subfamily.

The protein localises to the cytoplasm. The catalysed reaction is L-homoserine + ATP = O-phospho-L-homoserine + ADP + H(+). It participates in amino-acid biosynthesis; L-threonine biosynthesis; L-threonine from L-aspartate: step 4/5. Catalyzes the ATP-dependent phosphorylation of L-homoserine to L-homoserine phosphate. The chain is Homoserine kinase from Clostridium botulinum (strain Alaska E43 / Type E3).